The primary structure comprises 174 residues: Caltractin ICL1e (174 aa).

A disordered region spans residues methionine 1 to aspartate 33. 4 consecutive EF-hand domains span residues aspartate 33–aspartate 68, isoleucine 88–asparagine 103, glutamate 105–threonine 140, and methionine 141–phenylalanine 174.

This sequence belongs to the centrin family. In terms of assembly, monomer.

It localises to the cytoplasm. It is found in the cytoskeleton. Functionally, plays a fundamental role in microtubule organizing center structure and function. Component of the infraciliary lattice (ICL) and the ciliary basal bodies. The sequence is that of Caltractin ICL1e (Icl1e) from Paramecium tetraurelia.